A 181-amino-acid polypeptide reads, in one-letter code: Acireductone dioxygenase (181 aa).

Residues His-97, His-99, Glu-103, and His-141 each coordinate Fe(2+). Residues His-97, His-99, Glu-103, and His-141 each coordinate Ni(2+).

It belongs to the acireductone dioxygenase (ARD) family. In terms of assembly, monomer. It depends on Fe(2+) as a cofactor. The cofactor is Ni(2+).

It carries out the reaction 1,2-dihydroxy-5-(methylsulfanyl)pent-1-en-3-one + O2 = 3-(methylsulfanyl)propanoate + CO + formate + 2 H(+). The enzyme catalyses 1,2-dihydroxy-5-(methylsulfanyl)pent-1-en-3-one + O2 = 4-methylsulfanyl-2-oxobutanoate + formate + 2 H(+). Its pathway is amino-acid biosynthesis; L-methionine biosynthesis via salvage pathway; L-methionine from S-methyl-5-thio-alpha-D-ribose 1-phosphate: step 5/6. In terms of biological role, catalyzes 2 different reactions between oxygen and the acireductone 1,2-dihydroxy-3-keto-5-methylthiopentene (DHK-MTPene) depending upon the metal bound in the active site. Fe-containing acireductone dioxygenase (Fe-ARD) produces formate and 2-keto-4-methylthiobutyrate (KMTB), the alpha-ketoacid precursor of methionine in the methionine recycle pathway. Ni-containing acireductone dioxygenase (Ni-ARD) produces methylthiopropionate, carbon monoxide and formate, and does not lie on the methionine recycle pathway. The protein is Acireductone dioxygenase of Pseudomonas syringae pv. tomato (strain ATCC BAA-871 / DC3000).